A 255-amino-acid chain; its full sequence is Ribose-5-phosphate isomerase (255 aa).

The protein belongs to the ribose 5-phosphate isomerase family.

It is found in the cytoplasm. The catalysed reaction is aldehydo-D-ribose 5-phosphate = D-ribulose 5-phosphate. The protein operates within carbohydrate degradation; pentose phosphate pathway; D-ribose 5-phosphate from D-ribulose 5-phosphate (non-oxidative stage): step 1/1. The chain is Ribose-5-phosphate isomerase (RKI1) from Eremothecium gossypii (strain ATCC 10895 / CBS 109.51 / FGSC 9923 / NRRL Y-1056) (Yeast).